The sequence spans 128 residues: Histone H2A type 1-H (128 aa).

Residues 1 to 22 (MSGRGKQGGKARAKAKTRSSRA) are disordered. At Ser-2 the chain carries N-acetylserine. Ser-2 is modified (phosphoserine; by RPS6KA5). At Arg-4 the chain carries Citrulline; alternate. Residue Arg-4 is modified to Symmetric dimethylarginine; by PRMT5; alternate. Lys-6 and Lys-10 each carry N6-(2-hydroxyisobutyryl)lysine; alternate. Residue Lys-6 is modified to N6-(beta-hydroxybutyryl)lysine; alternate. Residues 7-19 (QGGKARAKAKTRS) show a composition bias toward basic residues. Lys-10 is modified (N6-lactoyllysine; alternate). Lys-10 carries the N6-succinyllysine; alternate modification. Residues Lys-14 and Lys-16 each participate in a glycyl lysine isopeptide (Lys-Gly) (interchain with G-Cter in ubiquitin) cross-link. Lys-37 carries the N6-(2-hydroxyisobutyryl)lysine; alternate modification. Lys-37 is subject to N6-(beta-hydroxybutyryl)lysine; alternate. Residue Lys-37 is modified to N6-crotonyllysine; alternate. An N6-(2-hydroxyisobutyryl)lysine mark is found at Lys-75 and Lys-76. Residue Lys-96 is modified to N6-(2-hydroxyisobutyryl)lysine; alternate. N6-succinyllysine; alternate is present on Lys-96. N6-glutaryllysine; alternate is present on Lys-96. Residue Gln-105 is modified to N5-methylglutamine. The residue at position 119 (Lys-119) is an N6-(2-hydroxyisobutyryl)lysine; alternate. N6-crotonyllysine; alternate is present on residues Lys-119 and Lys-120. N6-glutaryllysine; alternate is present on residues Lys-119 and Lys-120. The residue at position 120 (Lys-120) is an N6-(beta-hydroxybutyryl)lysine; alternate. Lys-120 is covalently cross-linked (Glycyl lysine isopeptide (Lys-Gly) (interchain with G-Cter in ubiquitin); alternate). The residue at position 121 (Thr-121) is a Phosphothreonine; by DCAF1. Lys-126 carries the N6-(beta-hydroxybutyryl)lysine; alternate modification. N6-crotonyllysine; alternate is present on Lys-126. Lys-126 bears the N6-glutaryllysine; alternate mark.

The protein belongs to the histone H2A family. The nucleosome is a histone octamer containing two molecules each of H2A, H2B, H3 and H4 assembled in one H3-H4 heterotetramer and two H2A-H2B heterodimers. The octamer wraps approximately 147 bp of DNA. Deiminated on Arg-4 in granulocytes upon calcium entry. Post-translationally, monoubiquitination of Lys-120 (H2AK119Ub) by RING1, TRIM37 and RNF2/RING2 complex gives a specific tag for epigenetic transcriptional repression and participates in X chromosome inactivation of female mammals. It is involved in the initiation of both imprinted and random X inactivation. Ubiquitinated H2A is enriched in inactive X chromosome chromatin. Ubiquitination of H2A functions downstream of methylation of 'Lys-27' of histone H3 (H3K27me). H2AK119Ub by RNF2/RING2 can also be induced by ultraviolet and may be involved in DNA repair. Following DNA double-strand breaks (DSBs), it is ubiquitinated through 'Lys-63' linkage of ubiquitin moieties by the E2 ligase UBE2N and the E3 ligases RNF8 and RNF168, leading to the recruitment of repair proteins to sites of DNA damage. Ubiquitination at Lys-14 and Lys-16 (H2AK13Ub and H2AK15Ub, respectively) in response to DNA damage is initiated by RNF168 that mediates monoubiquitination at these 2 sites, and 'Lys-63'-linked ubiquitin are then conjugated to monoubiquitin; RNF8 is able to extend 'Lys-63'-linked ubiquitin chains in vitro. H2AK119Ub and ionizing radiation-induced 'Lys-63'-linked ubiquitination (H2AK13Ub and H2AK15Ub) are distinct events. In terms of processing, phosphorylation on Ser-2 (H2AS1ph) is enhanced during mitosis. Phosphorylation on Ser-2 by RPS6KA5/MSK1 directly represses transcription. Acetylation of H3 inhibits Ser-2 phosphorylation by RPS6KA5/MSK1. Phosphorylation at Thr-121 (H2AT120ph) by DCAF1 is present in the regulatory region of many tumor suppresor genes and down-regulates their transcription. Symmetric dimethylation on Arg-4 by the PRDM1/PRMT5 complex may play a crucial role in the germ-cell lineage. Post-translationally, glutamine methylation at Gln-105 (H2AQ104me) by FBL is specifically dedicated to polymerase I. It is present at 35S ribosomal DNA locus and impairs binding of the FACT complex. In terms of processing, crotonylation (Kcr) is specifically present in male germ cells and marks testis-specific genes in post-meiotic cells, including X-linked genes that escape sex chromosome inactivation in haploid cells. Crotonylation marks active promoters and enhancers and confers resistance to transcriptional repressors. It is also associated with post-meiotically activated genes on autosomes. Hydroxybutyrylation of histones is induced by starvation. Post-translationally, lactylated in macrophages by EP300/P300 by using lactoyl-CoA directly derived from endogenous or exogenous lactate, leading to stimulates gene transcription.

It localises to the nucleus. Its subcellular location is the chromosome. Core component of nucleosome. Nucleosomes wrap and compact DNA into chromatin, limiting DNA accessibility to the cellular machineries which require DNA as a template. Histones thereby play a central role in transcription regulation, DNA repair, DNA replication and chromosomal stability. DNA accessibility is regulated via a complex set of post-translational modifications of histones, also called histone code, and nucleosome remodeling. The protein is Histone H2A type 1-H of Mus musculus (Mouse).